Reading from the N-terminus, the 192-residue chain is UPF0149 protein YPO0911/y3298/YP_3608 (192 aa).

It belongs to the UPF0149 family.

This is UPF0149 protein YPO0911/y3298/YP_3608 from Yersinia pestis.